Here is a 211-residue protein sequence, read N- to C-terminus: HTH-type transcriptional repressor FabR (211 aa).

The HTH tetR-type domain maps to 10–70 (RTRRSLIEAA…TMVDESGLML (61 aa)). The H-T-H motif DNA-binding region spans 33-52 (SLREVSREAGIAPTSFYRHF).

In terms of assembly, homodimer.

The protein resides in the cytoplasm. Its function is as follows. Represses the transcription of fabB, involved in unsaturated fatty acid (UFA) biosynthesis. By controlling UFA production, FabR directly influences the physical properties of the membrane bilayer. The chain is HTH-type transcriptional repressor FabR from Yersinia pseudotuberculosis serotype O:1b (strain IP 31758).